The following is a 210-amino-acid chain: Na(+)-translocating NADH-quinone reductase subunit D (210 aa).

The next 6 helical transmembrane spans lie at 14–34 (PIVS…ALAV), 42–62 (LVMT…ISML), 72–92 (IIVQ…VLQA), 103–123 (VFVG…AYAM), 131–151 (FMDG…VGFV), and 178–198 (NGLL…IWII).

The protein belongs to the NqrDE/RnfAE family. In terms of assembly, composed of six subunits; NqrA, NqrB, NqrC, NqrD, NqrE and NqrF.

It is found in the cell inner membrane. The catalysed reaction is a ubiquinone + n Na(+)(in) + NADH + H(+) = a ubiquinol + n Na(+)(out) + NAD(+). Functionally, NQR complex catalyzes the reduction of ubiquinone-1 to ubiquinol by two successive reactions, coupled with the transport of Na(+) ions from the cytoplasm to the periplasm. NqrA to NqrE are probably involved in the second step, the conversion of ubisemiquinone to ubiquinol. The sequence is that of Na(+)-translocating NADH-quinone reductase subunit D from Shewanella woodyi (strain ATCC 51908 / MS32).